We begin with the raw amino-acid sequence, 380 residues long: Nucleoporin Nup43 (380 aa).

M1 is subject to N-acetylmethionine. 6 WD repeats span residues 8–57, 72–110, 127–166, 170–208, 215–255, and 259–299; these read FVSQ…NLDS, RHHGDVMDLQFFDQERIVAASSTGCVTVFLHHPNNQTLS, PSYSSAPCTGVVCNNPEIVTVGEDGRINLFRADHKEAVRT, ADSSTLHAVTFLRTPEILTVNSIGQLKIWDFRQQGNEPS, GDRV…MPVS, and AHEA…PEKS.

Component of the Nup107-160 subcomplex of the nuclear pore complex (NPC). The Nup107-160 subcomplex includes NUP160, NUP133, NUP107, NUP98, NUP85, NUP43, NUP37, SEH1 and SEC13.

It is found in the chromosome. Its subcellular location is the centromere. The protein localises to the kinetochore. The protein resides in the nucleus. It localises to the nuclear pore complex. Component of the Nup107-160 subcomplex of the nuclear pore complex (NPC). The Nup107-160 subcomplex is required for the assembly of a functional NPC. The Nup107-160 subcomplex is also required for normal kinetochore microtubule attachment, mitotic progression and chromosome segregation. The sequence is that of Nucleoporin Nup43 (NUP43) from Homo sapiens (Human).